A 36-amino-acid chain; its full sequence is Conotoxin Cl14.10 (36 aa).

Residues 1-2 constitute a propeptide that is removed on maturation; the sequence is NE.

Contains 2 disulfide bond. Expressed by the venom duct.

The protein resides in the secreted. This Californiconus californicus (California cone) protein is Conotoxin Cl14.10.